A 177-amino-acid polypeptide reads, in one-letter code: ATP synthase subunit delta (177 aa).

It belongs to the ATPase delta chain family. F-type ATPases have 2 components, F(1) - the catalytic core - and F(0) - the membrane proton channel. F(1) has five subunits: alpha(3), beta(3), gamma(1), delta(1), epsilon(1). F(0) has three main subunits: a(1), b(2) and c(10-14). The alpha and beta chains form an alternating ring which encloses part of the gamma chain. F(1) is attached to F(0) by a central stalk formed by the gamma and epsilon chains, while a peripheral stalk is formed by the delta and b chains.

It localises to the cell inner membrane. Its function is as follows. F(1)F(0) ATP synthase produces ATP from ADP in the presence of a proton or sodium gradient. F-type ATPases consist of two structural domains, F(1) containing the extramembraneous catalytic core and F(0) containing the membrane proton channel, linked together by a central stalk and a peripheral stalk. During catalysis, ATP synthesis in the catalytic domain of F(1) is coupled via a rotary mechanism of the central stalk subunits to proton translocation. In terms of biological role, this protein is part of the stalk that links CF(0) to CF(1). It either transmits conformational changes from CF(0) to CF(1) or is implicated in proton conduction. The protein is ATP synthase subunit delta of Erwinia tasmaniensis (strain DSM 17950 / CFBP 7177 / CIP 109463 / NCPPB 4357 / Et1/99).